Consider the following 217-residue polypeptide: uncharacterized protein (217 aa).

Helical transmembrane passes span 4 to 23 (IYGIFAFVVLVFFYLLGKET), 44 to 66 (NVVILSVIAFIGVGIFTAYLTWV), 76 to 98 (TVETAGLTATAFLLGGIFGSIII), 111 to 128 (FLYLCFIISAVLFYIHAI), 132 to 154 (MAMVAAVLFVLGFFFISALPLAL), 166 to 188 (AGTANSSLWLFSQVGSVVLIVLF), and 198 to 215 (LLLSAGLLAVSFLLALQL).

The protein resides in the cell membrane. This is an uncharacterized protein from Archaeoglobus fulgidus (strain ATCC 49558 / DSM 4304 / JCM 9628 / NBRC 100126 / VC-16).